The primary structure comprises 30 residues: Thrombin-like enzyme LmrSP-2 (30 aa).

Belongs to the peptidase S1 family. Snake venom subfamily. As to expression, expressed by the venom gland.

It is found in the secreted. In terms of biological role, thrombin-like snake venom serine protease that cleaves alpha-chain of fibrinogen (FGA) releases only fibrinopeptide A. Shows coagulant, esterase and amidase activities. This Lachesis muta rhombeata (Bushmaster) protein is Thrombin-like enzyme LmrSP-2.